A 154-amino-acid chain; its full sequence is Large ribosomal subunit protein uL13 (154 aa).

Belongs to the universal ribosomal protein uL13 family. In terms of assembly, part of the 50S ribosomal subunit.

Functionally, this protein is one of the early assembly proteins of the 50S ribosomal subunit, although it is not seen to bind rRNA by itself. It is important during the early stages of 50S assembly. The sequence is that of Large ribosomal subunit protein uL13 from Rhizobium johnstonii (strain DSM 114642 / LMG 32736 / 3841) (Rhizobium leguminosarum bv. viciae).